Here is a 107-residue protein sequence, read N- to C-terminus: Chlorobenzene dioxygenase, ferredoxin component (107 aa).

One can recognise a Rieske domain in the interval 4 to 99; the sequence is TYIMRQSDLP…IKVEGGDVHV (96 aa). [2Fe-2S] cluster contacts are provided by cysteine 43, histidine 45, cysteine 62, and histidine 65.

It belongs to the bacterial ring-hydroxylating dioxygenase ferredoxin component family. This dioxygenase system consists of four proteins: the two subunits of the oxygenase component (TecA1 and TecA2), a ferredoxin (TecA3) and a ferredoxin reductase (TecA4). It depends on [2Fe-2S] cluster as a cofactor.

Its pathway is aromatic compound metabolism. Its function is as follows. Part of the chlorobenzene dioxygenase system that catalyzes the dihydroxylation of a range of aromatic compounds, including chlorinated benzenes and toluenes, and dinuclear aromatics such as biphenyl and dibenzo-p-dioxin. This is Chlorobenzene dioxygenase, ferredoxin component from Cupriavidus sp. (strain PS12).